Here is a 530-residue protein sequence, read N- to C-terminus: Bifunctional purine biosynthesis protein PurH (530 aa).

Positions 1–148 constitute an MGS-like domain; it reads MNNARPIRRA…KNHKDVTIVV (148 aa).

Belongs to the PurH family.

It carries out the reaction (6R)-10-formyltetrahydrofolate + 5-amino-1-(5-phospho-beta-D-ribosyl)imidazole-4-carboxamide = 5-formamido-1-(5-phospho-D-ribosyl)imidazole-4-carboxamide + (6S)-5,6,7,8-tetrahydrofolate. The catalysed reaction is IMP + H2O = 5-formamido-1-(5-phospho-D-ribosyl)imidazole-4-carboxamide. It participates in purine metabolism; IMP biosynthesis via de novo pathway; 5-formamido-1-(5-phospho-D-ribosyl)imidazole-4-carboxamide from 5-amino-1-(5-phospho-D-ribosyl)imidazole-4-carboxamide (10-formyl THF route): step 1/1. It functions in the pathway purine metabolism; IMP biosynthesis via de novo pathway; IMP from 5-formamido-1-(5-phospho-D-ribosyl)imidazole-4-carboxamide: step 1/1. This is Bifunctional purine biosynthesis protein PurH from Vibrio parahaemolyticus serotype O3:K6 (strain RIMD 2210633).